An 809-amino-acid polypeptide reads, in one-letter code: MAATVYQRLHSVAVGVGSAAGSAIGSGSASLPGSGTGSGSGIGHAGNTSSSTSSALLSHSQLTRSLERILEEAHFSGELILTNRKLKDFPRTGTKYSLTDTVIADLSRNRFAELPEEVTTFAFLETLLLYHNTIRSIPESVKQLSSLTYLDLRSNQLSSLPREICFLPLQVLLVSNNRLTSLPDELGRLDQTLTDLDASYNQLANLPARLGELRSLRSLSLRSNHLLYLPRELTCLSLISLDVSNNKIASLPLEIRHMSTLVELQLENNPLTSPPASLCMRGLVHVFKFLETQATKDEKGSRSGGNYDGYTTLRRAPRHNSSGNVLEASTTGSTNNQRRHQVDSGYNTSDGLDKRWSHDAPTKSKTDSPLHCVSNSTAATLPRTLPSAVHSQADLMDASLTSSTSTIVDESLTLSPTASPCKLSYAHSNSSSNGSSPDQDDDIMLDHQERTVHHANGRSGKGLGNIQTYKEYKEALKQQRNQEISVYKQKHPNANHSPNDDEDLSPSPPSISNGSSSNTLPKSIMKQNSNQIGHNGNGNGSANGNGVDDVVIPKKPIQKVIPSRITEIKPASTSDIRSANSSDCLGYVKPQSPMKNGTSKFNTSNGGGVQTTVGIVSSTTIKSPVSSTTKLGTVKTHRSVTWNHDIPAEKLSFTMRREFDRQREETELMSQLRTIIETRLKMTLPVDIASALTDGVILCHLANYVRPRSVASIHVPSPGVNKLTMARCRRNVDNFLEACRRIGVDENLICCAADVLEGKGAVQVAITVGELFRLHGNGGCGSGNSSGAATPTKSPTRTTRATMSPTPLA.

A disordered region spans residues 27–53 (GSASLPGSGTGSGSGIGHAGNTSSSTS). Residues 34 to 44 (SGTGSGSGIGH) show a composition bias toward gly residues. LRR repeat units lie at residues 72–96 (EAHFSGELILTNRKLKDFPRTGTKY), 98–121 (LTDTVIADLSRNRFAELPEEVTTF), 122–144 (AFLETLLLYHNTIRSIPESVKQL), 145–168 (SSLTYLDLRSNQLSSLPREICFLP), 170–189 (QVLLVSNNRLTSLPDELGRL), 191–213 (QTLTDLDASYNQLANLPARLGEL), 214–236 (RSLRSLSLRSNHLLYLPRELTCL), 238–258 (LISLDVSNNKIASLPLEIRHM), and 260–282 (TLVELQLENNPLTSPPASLCMRG). Disordered regions lie at residues 295–373 (TKDE…LHCV), 423–442 (LSYAHSNSSSNGSSPDQDDD), and 490–550 (KHPN…VDDV). Positions 319 to 336 (HNSSGNVLEASTTGSTNN) are enriched in polar residues. Residues 351-368 (GLDKRWSHDAPTKSKTDS) are compositionally biased toward basic and acidic residues. Over residues 518–532 (NTLPKSIMKQNSNQI) the composition is skewed to polar residues. The region spanning 662–776 (QREETELMSQ…TVGELFRLHG (115 aa)) is the Calponin-homology (CH) domain. Positions 783-809 (GNSSGAATPTKSPTRTTRATMSPTPLA) are disordered. Residues 788–809 (AATPTKSPTRTTRATMSPTPLA) are compositionally biased toward polar residues.

The protein localises to the cytoplasm. It is found in the cytoskeleton. It localises to the cell cortex. Its subcellular location is the cleavage furrow. In terms of biological role, may play a role in the stabilization of the actin-rich cell cortex during cell division. This chain is Leucine-rich repeat and calponin homology domain-containing protein, found in Drosophila melanogaster (Fruit fly).